Here is a 290-residue protein sequence, read N- to C-terminus: 33 kDa chaperonin (290 aa).

2 cysteine pairs are disulfide-bonded: C235/C237 and C268/C271.

This sequence belongs to the HSP33 family. In terms of processing, under oxidizing conditions two disulfide bonds are formed involving the reactive cysteines. Under reducing conditions zinc is bound to the reactive cysteines and the protein is inactive.

It is found in the cytoplasm. Redox regulated molecular chaperone. Protects both thermally unfolding and oxidatively damaged proteins from irreversible aggregation. Plays an important role in the bacterial defense system toward oxidative stress. The sequence is that of 33 kDa chaperonin from Streptococcus mutans serotype c (strain ATCC 700610 / UA159).